We begin with the raw amino-acid sequence, 179 residues long: Protein GrpE (179 aa).

The tract at residues 1–22 (MTDNNIENNEEEIRKAPSANDR) is disordered. A compositionally biased stretch (basic and acidic residues) spans 11–22 (EEIRKAPSANDR).

Belongs to the GrpE family. Homodimer.

It is found in the cytoplasm. In terms of biological role, participates actively in the response to hyperosmotic and heat shock by preventing the aggregation of stress-denatured proteins, in association with DnaK and GrpE. It is the nucleotide exchange factor for DnaK and may function as a thermosensor. Unfolded proteins bind initially to DnaJ; upon interaction with the DnaJ-bound protein, DnaK hydrolyzes its bound ATP, resulting in the formation of a stable complex. GrpE releases ADP from DnaK; ATP binding to DnaK triggers the release of the substrate protein, thus completing the reaction cycle. Several rounds of ATP-dependent interactions between DnaJ, DnaK and GrpE are required for fully efficient folding. In Rickettsia canadensis (strain McKiel), this protein is Protein GrpE.